The chain runs to 248 residues: Probable transcriptional regulatory protein Fphi_1565 (248 aa).

This sequence belongs to the TACO1 family.

The protein localises to the cytoplasm. This is Probable transcriptional regulatory protein Fphi_1565 from Francisella philomiragia subsp. philomiragia (strain ATCC 25017 / CCUG 19701 / FSC 153 / O#319-036).